The primary structure comprises 215 residues: Autophagy-related protein 101 (215 aa).

The tract at residues 124 to 147 (PVGKSHHSKLVMDPGEASEERSSR) is disordered.

This sequence belongs to the ATG101 family. As to quaternary structure, interacts with ATG11 and ATG13A.

Its subcellular location is the cytoplasmic vesicle. It is found in the autophagosome. Its function is as follows. Accessory protein involved in autophagy. Acts as a scaffold protein of the ATG1-ATG13 complex for faithful delivery of autophagic vesicles to the vacuole. Required for selective mitophagy. This chain is Autophagy-related protein 101, found in Arabidopsis thaliana (Mouse-ear cress).